The chain runs to 93 residues: N-myc protein (93 aa).

Efficient DNA binding requires dimerization with another bHLH protein. Binds DNA as a heterodimer with MAX. As to expression, barely detectable in most tissues assayed.

The protein resides in the nucleus. May function as a transcription factor. The sequence is that of N-myc protein (mycn) from Danio rerio (Zebrafish).